Here is a 446-residue protein sequence, read N- to C-terminus: Transcription factor Dp-2 (446 aa).

Thr-2 bears the N-acetylthreonine mark. Ser-24 is modified (phosphoserine). The interval 60 to 82 (PQMIISTPQRLTSSGSVLIGSPY) is interaction with CEBPA. Residues 103-118 (GDRKRARKFIDSDFSE) carry the Nuclear localization signal motif. Ser-122 is modified (phosphoserine). Residues 129–210 (GKGLRHFSMK…KKEIKWIGLP (82 aa)) mediate DNA binding. The DEF box signature appears at 176-210 (DQKNIRRRVYDALNVLMAMNIISKEKKEIKWIGLP). A dimerization region spans residues 219 to 292 (NLEIEKQRRI…RKTVIDCSIS (74 aa)). Positions 229-261 (ERIKQKRAQLQELLLQQIAFKNLVQRNRQNEQQ) are DCB1. The DCB2 stretch occupies residues 274 to 330 (LPFIIINTSRKTVIDCSISSDKFEYLFNFDNTFEIHDDIEVLKRMGMSFGLESGKCS). Residues 409-419 (SHQSSSAASHC) show a composition bias toward low complexity. Residues 409–446 (SHQSSSAASHCSESRGETPCSFNDEDEEDDEEDSSSPE) form a disordered region. Acidic residues predominate over residues 431–446 (NDEDEEDDEEDSSSPE).

It belongs to the E2F/DP family. Component of the DRTF1/E2F transcription factor complex. Forms heterodimers with E2F family members. The complex can interact with hypophosphorylated retinoblastoma protein RB1 and related proteins (RBL1 and RBL2) that inhibit the E2F transactivation domain. During the cell cycle, RB becomes phosphorylated in mid-to-late G1 phase, detaches from the DRTF1/E2F complex rendering E2F transcriptionally active. Viral oncoproteins, notably E1A, T-antigen and HPV E7, are capable of sequestering RB protein, thus releasing the active complex. Interacts with GMCL. Component of the DREAM complex (also named LINC complex) at least composed of E2F4, E2F5, LIN9, LIN37, LIN52, LIN54, MYBL1, MYBL2, RBL1, RBL2, RBBP4, TFDP1 and TFDP2. The complex exists in quiescent cells where it represses cell cycle-dependent genes. It dissociates in S phase when LIN9, LIN37, LIN52 and LIN54 form a subcomplex that binds to MYBL2. The complex TFDP2:E2F1 interacts with CEBPA; the interaction prevents CEBPA binding to target genes promoters and represses its transcriptional activity. Ser-24 is probably phosphorylated by CDK2. In terms of tissue distribution, high levels in heart and skeletal muscle. Also found in placenta, kidney, brain, lung and liver. The presence as well as the abundance of the different transcripts appear to vary significantly in different tissues and cell lines.

The protein resides in the nucleus. Its function is as follows. Can stimulate E2F-dependent transcription. Binds DNA cooperatively with E2F family members through the E2 recognition site, 5'-TTTC[CG]CGC-3', found in the promoter region of a number of genes whose products are involved in cell cycle regulation or in DNA replication. The TFDP2:E2F complex functions in the control of cell-cycle progression from G1 to S phase. The E2F1:DP complex appears to mediate both cell proliferation and apoptosis. Blocks adipocyte differentiation by repressing CEBPA binding to its target gene promoters. This is Transcription factor Dp-2 (TFDP2) from Homo sapiens (Human).